A 61-amino-acid chain; its full sequence is Metallothionein-1 (61 aa).

Met1 is modified (N-acetylmethionine). The tract at residues 1 to 29 is beta; that stretch reads MDPNCSCSTGGSCTCSSSCGCKNCKCTSC. The a divalent metal cation site is built by Cys5, Cys7, Cys13, Cys15, Cys19, Cys21, Cys24, Cys26, Cys29, Cys33, Cys34, Cys36, Cys37, Cys41, Cys44, Cys48, Cys50, Cys57, Cys59, and Cys60. An alpha region spans residues 30–61; it reads KKSCCSCCPVGCSKCAQGCVCKGASDKCTCCA.

It belongs to the metallothionein superfamily. Type 1 family.

Functionally, metallothioneins have a high content of cysteine residues that bind various heavy metals; these proteins are transcriptionally regulated by both heavy metals and glucocorticoids. The polypeptide is Metallothionein-1 (Mt1) (Rattus norvegicus (Rat)).